Reading from the N-terminus, the 356-residue chain is MAYKLLIINPGSTSTKIGVYEGEKEILEETLRHSAEEILKYDTIFDQLDFRKEVILKVLKEKGIDINELDAVVGRGGMLKPIEGGTYEVNEAMVEDLKIGVQGPHASNLGGILSNEIAKEIGKRAFIVDPVVVDEMEDVARLSGVPELPRKSKFHALNQKAVAKRYAKEHNTSYEDVNLIVVHMGGGVSVGAHRKGRVIDVNNALDGDGPFSPERAGGVPSGELLEMCFSGKYSKEEVYKKLVGKGGFVAYANTNDARDLIKLSQEGDEKGSLIFNAFIYQIAKEIGSMAVVLDGEVDAIVLTGGIAYSDYVTNAINKKVKWIAPMVVYGGEDELLALAQGAIRVLDGVEEAKIYK.

It belongs to the acetokinase family.

It localises to the cytoplasm. It catalyses the reaction butanoate + ATP = butanoyl phosphate + ADP. It functions in the pathway lipid metabolism; butanoate metabolism. Its function is as follows. Catalyzes the conversion of butyryl-CoA through butyryl phosphate to butyrate. This chain is Butyrate kinase (buk), found in Clostridium perfringens (strain ATCC 13124 / DSM 756 / JCM 1290 / NCIMB 6125 / NCTC 8237 / Type A).